We begin with the raw amino-acid sequence, 272 residues long: Shikimate dehydrogenase (NADP(+)) (272 aa).

Residues 14–16 (SKS) and threonine 61 each bind shikimate. Lysine 65 (proton acceptor) is an active-site residue. An NADP(+)-binding site is contributed by glutamate 77. Shikimate-binding residues include asparagine 86 and aspartate 102. Residues 126–130 (GAGGA), 149–154 (NRTVSR), and methionine 213 contribute to the NADP(+) site. Tyrosine 215 contributes to the shikimate binding site. NADP(+) is bound at residue glycine 237.

This sequence belongs to the shikimate dehydrogenase family. In terms of assembly, homodimer.

It carries out the reaction shikimate + NADP(+) = 3-dehydroshikimate + NADPH + H(+). It participates in metabolic intermediate biosynthesis; chorismate biosynthesis; chorismate from D-erythrose 4-phosphate and phosphoenolpyruvate: step 4/7. Its function is as follows. Involved in the biosynthesis of the chorismate, which leads to the biosynthesis of aromatic amino acids. Catalyzes the reversible NADPH linked reduction of 3-dehydroshikimate (DHSA) to yield shikimate (SA). The protein is Shikimate dehydrogenase (NADP(+)) of Shigella dysenteriae serotype 1 (strain Sd197).